A 476-amino-acid polypeptide reads, in one-letter code: tRNA(Ile)-lysidine synthase (476 aa).

30–35 serves as a coordination point for ATP; it reads SGGPDS.

The protein belongs to the tRNA(Ile)-lysidine synthase family.

Its subcellular location is the cytoplasm. It carries out the reaction cytidine(34) in tRNA(Ile2) + L-lysine + ATP = lysidine(34) in tRNA(Ile2) + AMP + diphosphate + H(+). Functionally, ligates lysine onto the cytidine present at position 34 of the AUA codon-specific tRNA(Ile) that contains the anticodon CAU, in an ATP-dependent manner. Cytidine is converted to lysidine, thus changing the amino acid specificity of the tRNA from methionine to isoleucine. The chain is tRNA(Ile)-lysidine synthase from Bacillus cereus (strain ATCC 14579 / DSM 31 / CCUG 7414 / JCM 2152 / NBRC 15305 / NCIMB 9373 / NCTC 2599 / NRRL B-3711).